The following is a 1182-amino-acid chain: Protein patched homolog 2 (1182 aa).

Over 1–57 the chain is Cytoplasmic; that stretch reads MVRPLSLGELPPSYTPPARSSAPHILAGSLQAPLWLRAYFQGLLFSLGCRIQKHCGK. The chain crosses the membrane as a helical span at residues 58 to 78; sequence VLFLGLVAFGALALGLRVAVI. Over 79-394 the chain is Extracellular; the sequence is ETDLEQLWVE…DILRAFSEVS (316 aa). The N-linked (GlcNAc...) asparagine glycan is linked to Asn370. The 159-residue stretch at 394 to 552 folds into the SSD domain; sequence STTRVVGGYL…MLVFPAILSL (159 aa). A helical membrane pass occupies residues 395 to 414; it reads TTRVVGGYLLMLAYACVTML. The Cytoplasmic portion of the chain corresponds to 415–428; sequence RWDCAQSQGAVGLA. The chain crosses the membrane as a helical span at residues 429–449; the sequence is GVLLVALAVASGLGLCALLGI. The Extracellular segment spans residues 450–457; it reads TFNAATTQ. Residues 458–478 traverse the membrane as a helical segment; sequence VLPFLALGIGVDDIFLLAHAF. Topologically, residues 479–501 are cytoplasmic; sequence TKAPPDTPLPERMGECLRSTGTS. Residues 502 to 522 form a helical membrane-spanning segment; sequence VALTSVNNMVAFFMAALVPIP. The Extracellular segment spans residues 523–531; sequence ALRAFSLQA. A helical transmembrane segment spans residues 532–552; the sequence is AIVVGCNFAAVMLVFPAILSL. Over 553–686 the chain is Cytoplasmic; sequence DLRRRHRQRL…APLLLQTRAK (134 aa). A helical membrane pass occupies residues 687–707; sequence ALVLLFFGALLGLSLYGATLV. At 708–963 the chain is on the extracellular side; sequence QDGLALTDVV…WEQYLGLRRC (256 aa). Asn812 carries an N-linked (GlcNAc...) asparagine glycan. A helical membrane pass occupies residues 964 to 984; it reads FLLAVCILLVCTFLVCALLLL. Residues 985 to 991 lie on the Cytoplasmic side of the membrane; that stretch reads SPWTAGL. A helical transmembrane segment spans residues 992–1012; that stretch reads IVLVLAMMTVELFGIMGFLGI. Position 1013 (Lys1013) is a topological domain, extracellular. Residues 1014 to 1034 form a helical membrane-spanning segment; it reads LSAIPVVILVASIGIGVEFTV. Over 1035-1064 the chain is Cytoplasmic; sequence HVALGFLTSHGSRNLRAASALEQTFAPVTD. A helical transmembrane segment spans residues 1065–1085; that stretch reads GAVSTLLGLLMLAGSNFDFII. Position 1086 (Arg1086) is a topological domain, extracellular. Residues 1087–1107 form a helical membrane-spanning segment; it reads YFFVVLTVLTLLGLLHGLLLL. At 1108–1182 the chain is on the cytoplasmic side; the sequence is PVLLSILGPP…YVHPASEEPT (75 aa).

It belongs to the patched family. Expressed in epithelial cells of the developing hair, tooth and whisker.

The protein resides in the membrane. In terms of biological role, plays a role in the control of cellular growth. May have a role in epidermal development. May act as a receptor for Sonic hedgehog (SHH). In Mus musculus (Mouse), this protein is Protein patched homolog 2 (Ptch2).